Here is a 329-residue protein sequence, read N- to C-terminus: 4-methyl-2-oxopentanoate reductase A (329 aa).

NAD(+)-binding positions include 162 to 163, 240 to 242, and Asp-266; these read GI and TAR. Arg-242 is a catalytic residue. Glu-271 is an active-site residue. His-289 (proton donor) is an active-site residue.

Belongs to the D-isomer specific 2-hydroxyacid dehydrogenase family.

It carries out the reaction (2R)-hydroxy-4-methylpentanoate + NADP(+) = 4-methyl-2-oxopentanoate + NADPH + H(+). The catalysed reaction is a (2R)-2-hydroxycarboxylate + NADP(+) = a 2-oxocarboxylate + NADPH + H(+). Its function is as follows. 4-methyl-2-oxopentanoate (MOA) reductase that reduces MOA, a possible intermediate in leucine synthesis, to D-leucate in a NADPH- or NADH-dependent manner, but with a preference for NADPH. In addition to MOA, shows broad substrate specificity toward 2-keto acids. The polypeptide is 4-methyl-2-oxopentanoate reductase A (Aspergillus oryzae (strain ATCC 42149 / RIB 40) (Yellow koji mold)).